Reading from the N-terminus, the 70-residue chain is Conotoxin Ep11.12 (70 aa).

Positions 1–26 (MMFRVTSVGCFLLVILSLNLVVLTNA) are cleaved as a signal peptide. Disulfide bonds link Cys-27/Cys-41, Cys-34/Cys-46, Cys-40/Cys-50, and Cys-45/Cys-54. At Pro-57 the chain carries Proline amide. A propeptide spanning residues 61-70 (AKLREFFRQR) is cleaved from the precursor.

It belongs to the conotoxin I2 superfamily. In terms of tissue distribution, expressed by the venom duct.

The protein localises to the secreted. The chain is Conotoxin Ep11.12 from Conus episcopatus (Bishop's cone).